Here is a 171-residue protein sequence, read N- to C-terminus: 3-hydroxydecanoyl-[acyl-carrier-protein] dehydratase (171 aa).

His-70 is an active-site residue.

Belongs to the thioester dehydratase family. FabA subfamily. As to quaternary structure, homodimer.

Its subcellular location is the cytoplasm. The catalysed reaction is a (3R)-hydroxyacyl-[ACP] = a (2E)-enoyl-[ACP] + H2O. It carries out the reaction (3R)-hydroxydecanoyl-[ACP] = (2E)-decenoyl-[ACP] + H2O. It catalyses the reaction (2E)-decenoyl-[ACP] = (3Z)-decenoyl-[ACP]. It participates in lipid metabolism; fatty acid biosynthesis. Its function is as follows. Necessary for the introduction of cis unsaturation into fatty acids. Catalyzes the dehydration of (3R)-3-hydroxydecanoyl-ACP to E-(2)-decenoyl-ACP and then its isomerization to Z-(3)-decenoyl-ACP. Can catalyze the dehydratase reaction for beta-hydroxyacyl-ACPs with saturated chain lengths up to 16:0, being most active on intermediate chain length. The protein is 3-hydroxydecanoyl-[acyl-carrier-protein] dehydratase of Methylococcus capsulatus (strain ATCC 33009 / NCIMB 11132 / Bath).